An 84-amino-acid chain; its full sequence is Small ribosomal subunit protein uS17 (84 aa).

This sequence belongs to the universal ribosomal protein uS17 family. In terms of assembly, part of the 30S ribosomal subunit.

One of the primary rRNA binding proteins, it binds specifically to the 5'-end of 16S ribosomal RNA. The sequence is that of Small ribosomal subunit protein uS17 from Borrelia garinii subsp. bavariensis (strain ATCC BAA-2496 / DSM 23469 / PBi) (Borreliella bavariensis).